We begin with the raw amino-acid sequence, 542 residues long: Calcium/calmodulin-dependent protein kinase type II subunit beta (542 aa).

The Protein kinase domain maps to 14–272; sequence YQLYEDIGKG…AHEALKHPWV (259 aa). Tyr-17 is modified (phosphotyrosine). Residues 20 to 28 and Lys-43 contribute to the ATP site; that span reads IGKGAFSVV. Residue Asp-136 is the Proton acceptor of the active site. An autoinhibitory domain region spans residues 283-292; it reads HRQETVECLK. Thr-287 bears the Phosphothreonine; by autocatalysis mark. The segment at 291 to 301 is calmodulin-binding; that stretch reads LKKFNARRKLK. Residues Thr-306 and Thr-307 each carry the phosphothreonine; by autocatalysis modification. The segment at 349–407 is disordered; sequence ADGVKPQTNSTKNSAAATSPKGTLPPAALEPQTTVIHNPVDGIKESSDSTHTTIEDEDT. A compositionally biased stretch (polar residues) spans 354-369; that stretch reads PQTNSTKNSAAATSPK. Ser-367, Ser-394, and Ser-397 each carry phosphoserine. Residues Thr-400 and Thr-401 each carry the phosphothreonine modification.

This sequence belongs to the protein kinase superfamily. CAMK Ser/Thr protein kinase family. CaMK subfamily. In terms of assembly, CAMK2 is composed of 4 different chains: alpha (CAMK2A), beta (CAMK2B), gamma (CAMK2G), and delta (CAMK2D). The different isoforms assemble into homo- or heteromultimeric holoenzymes composed of 12 subunits with two hexameric rings stacked one on top of the other. Interacts with SYNGAP1, CAMK2N2 and MPDZ. Interacts with FOXO3. Interacts (when in a kinase inactive state not associated with calmodulin) with ARC; leading to target ARC to inactive synapses. Interacts with CAMK2N1; this interaction requires CAMK2B activation by Ca(2+). In terms of processing, autophosphorylation of Thr-287 following activation by Ca(2+)/calmodulin. Phosphorylation of Thr-287 locks the kinase into an activated state.

The protein localises to the cytoplasm. It is found in the cytoskeleton. It localises to the microtubule organizing center. Its subcellular location is the centrosome. The protein resides in the sarcoplasmic reticulum membrane. The protein localises to the synapse. The catalysed reaction is L-seryl-[protein] + ATP = O-phospho-L-seryl-[protein] + ADP + H(+). It carries out the reaction L-threonyl-[protein] + ATP = O-phospho-L-threonyl-[protein] + ADP + H(+). Its activity is regulated as follows. Activated by Ca(2+)/calmodulin. Binding of calmodulin results in conformational change that relieves intrasteric autoinhibition and allows autophosphorylation of Thr-287 which turns the kinase in a constitutively active form and confers to the kinase a Ca(2+)-independent activity. Functionally, calcium/calmodulin-dependent protein kinase that functions autonomously after Ca(2+)/calmodulin-binding and autophosphorylation, and is involved in dendritic spine and synapse formation, neuronal plasticity and regulation of sarcoplasmic reticulum Ca(2+) transport in skeletal muscle. In neurons, plays an essential structural role in the reorganization of the actin cytoskeleton during plasticity by binding and bundling actin filaments in a kinase-independent manner. This structural function is required for correct targeting of CaMK2A, which acts downstream of NMDAR to promote dendritic spine and synapse formation and maintain synaptic plasticity which enables long-term potentiation (LTP) and hippocampus-dependent learning. In developing hippocampal neurons, promotes arborization of the dendritic tree and in mature neurons, promotes dendritic remodeling. Also regulates the migration of developing neurons. Participates in the modulation of skeletal muscle function in response to exercise. In slow-twitch muscles, is involved in regulation of sarcoplasmic reticulum (SR) Ca(2+) transport and in fast-twitch muscle participates in the control of Ca(2+) release from the SR through phosphorylation of triadin, a ryanodine receptor-coupling factor, and phospholamban (PLN/PLB), an endogenous inhibitor of SERCA2A/ATP2A2. In response to interferon-gamma (IFN-gamma) stimulation, catalyzes phosphorylation of STAT1, stimulating the JAK-STAT signaling pathway. Phosphorylates reticulophagy regulator RETREG1 at 'Ser-147' under endoplasmic reticulum stress conditions which enhances RETREG1 oligomerization and its membrane scission and reticulophagy activity. The polypeptide is Calcium/calmodulin-dependent protein kinase type II subunit beta (CAMK2B) (Bos taurus (Bovine)).